Here is a 349-residue protein sequence, read N- to C-terminus: Fructose-1,6-bisphosphatase class 1 (349 aa).

Residues E91, D110, L112, and D113 each coordinate Mg(2+). Residues 113 to 116 (DGSS) and N205 each bind substrate. E277 contributes to the Mg(2+) binding site.

Belongs to the FBPase class 1 family. As to quaternary structure, homotetramer. It depends on Mg(2+) as a cofactor.

The protein resides in the cytoplasm. It catalyses the reaction beta-D-fructose 1,6-bisphosphate + H2O = beta-D-fructose 6-phosphate + phosphate. Its pathway is carbohydrate biosynthesis; gluconeogenesis. The sequence is that of Fructose-1,6-bisphosphatase class 1 from Sinorhizobium medicae (strain WSM419) (Ensifer medicae).